The primary structure comprises 445 residues: Methylenetetrahydrofolate--tRNA-(uracil-5-)-methyltransferase TrmFO (445 aa).

8–13 is a binding site for FAD; it reads GAGLAG.

This sequence belongs to the MnmG family. TrmFO subfamily. The cofactor is FAD.

Its subcellular location is the cytoplasm. The catalysed reaction is uridine(54) in tRNA + (6R)-5,10-methylene-5,6,7,8-tetrahydrofolate + NADH + H(+) = 5-methyluridine(54) in tRNA + (6S)-5,6,7,8-tetrahydrofolate + NAD(+). The enzyme catalyses uridine(54) in tRNA + (6R)-5,10-methylene-5,6,7,8-tetrahydrofolate + NADPH + H(+) = 5-methyluridine(54) in tRNA + (6S)-5,6,7,8-tetrahydrofolate + NADP(+). Functionally, catalyzes the folate-dependent formation of 5-methyl-uridine at position 54 (M-5-U54) in all tRNAs. This chain is Methylenetetrahydrofolate--tRNA-(uracil-5-)-methyltransferase TrmFO, found in Rhodobacter capsulatus (strain ATCC BAA-309 / NBRC 16581 / SB1003).